The sequence spans 228 residues: Urease accessory protein UreF 1 (228 aa).

This sequence belongs to the UreF family. In terms of assembly, ureD, UreF and UreG form a complex that acts as a GTP-hydrolysis-dependent molecular chaperone, activating the urease apoprotein by helping to assemble the nickel containing metallocenter of UreC. The UreE protein probably delivers the nickel.

It localises to the cytoplasm. Required for maturation of urease via the functional incorporation of the urease nickel metallocenter. This Brucella anthropi (strain ATCC 49188 / DSM 6882 / CCUG 24695 / JCM 21032 / LMG 3331 / NBRC 15819 / NCTC 12168 / Alc 37) (Ochrobactrum anthropi) protein is Urease accessory protein UreF 1.